A 334-amino-acid chain; its full sequence is Holliday junction branch migration complex subunit RuvB (334 aa).

The segment at 4–184 is large ATPase domain (RuvB-L); the sequence is ADRIISPNAT…FGIVQRLEFY (181 aa). ATP-binding positions include Ile23, Arg24, Gly65, Lys68, Thr69, Thr70, 131 to 133, Arg174, Tyr184, and Arg221; that span reads EDY. Thr69 is a binding site for Mg(2+). The segment at 185 to 255 is small ATPAse domain (RuvB-S); it reads SVEDLRHIVA…VADKALNMLN (71 aa). The segment at 258–334 is head domain (RuvB-H); that stretch reads LHGFDHMDRR…YNHFGLTMPE (77 aa). Positions 313 and 318 each coordinate DNA.

It belongs to the RuvB family. Homohexamer. Forms an RuvA(8)-RuvB(12)-Holliday junction (HJ) complex. HJ DNA is sandwiched between 2 RuvA tetramers; dsDNA enters through RuvA and exits via RuvB. An RuvB hexamer assembles on each DNA strand where it exits the tetramer. Each RuvB hexamer is contacted by two RuvA subunits (via domain III) on 2 adjacent RuvB subunits; this complex drives branch migration. In the full resolvosome a probable DNA-RuvA(4)-RuvB(12)-RuvC(2) complex forms which resolves the HJ.

The protein localises to the cytoplasm. It carries out the reaction ATP + H2O = ADP + phosphate + H(+). Functionally, the RuvA-RuvB-RuvC complex processes Holliday junction (HJ) DNA during genetic recombination and DNA repair, while the RuvA-RuvB complex plays an important role in the rescue of blocked DNA replication forks via replication fork reversal (RFR). RuvA specifically binds to HJ cruciform DNA, conferring on it an open structure. The RuvB hexamer acts as an ATP-dependent pump, pulling dsDNA into and through the RuvAB complex. RuvB forms 2 homohexamers on either side of HJ DNA bound by 1 or 2 RuvA tetramers; 4 subunits per hexamer contact DNA at a time. Coordinated motions by a converter formed by DNA-disengaged RuvB subunits stimulates ATP hydrolysis and nucleotide exchange. Immobilization of the converter enables RuvB to convert the ATP-contained energy into a lever motion, pulling 2 nucleotides of DNA out of the RuvA tetramer per ATP hydrolyzed, thus driving DNA branch migration. The RuvB motors rotate together with the DNA substrate, which together with the progressing nucleotide cycle form the mechanistic basis for DNA recombination by continuous HJ branch migration. Branch migration allows RuvC to scan DNA until it finds its consensus sequence, where it cleaves and resolves cruciform DNA. The protein is Holliday junction branch migration complex subunit RuvB of Hahella chejuensis (strain KCTC 2396).